The sequence spans 294 residues: ATP synthase gamma chain (294 aa).

This sequence belongs to the ATPase gamma chain family. As to quaternary structure, F-type ATPases have 2 components, CF(1) - the catalytic core - and CF(0) - the membrane proton channel. CF(1) has five subunits: alpha(3), beta(3), gamma(1), delta(1), epsilon(1). CF(0) has three main subunits: a, b and c.

The protein localises to the cell inner membrane. Functionally, produces ATP from ADP in the presence of a proton gradient across the membrane. The gamma chain is believed to be important in regulating ATPase activity and the flow of protons through the CF(0) complex. The chain is ATP synthase gamma chain from Campylobacter jejuni subsp. jejuni serotype O:6 (strain 81116 / NCTC 11828).